Consider the following 540-residue polypeptide: Pentatricopeptide repeat-containing protein At1g80880, mitochondrial (540 aa).

The N-terminal 87 residues, 1-87 (MAAIVAIGRK…ETFDINLTAL (87 aa)), are a transit peptide targeting the mitochondrion. PPR repeat units follow at residues 154 to 184 (DQKS…MFNV), 188 to 222 (TRKA…KHTP), 223 to 253 (YDEA…SKKL), 257 to 292 (DVEG…CITP), 293 to 327 (NKDS…GLAP), 328 to 362 (GIEV…GLKP), 363 to 397 (DSVT…NLSP), 402 to 428 (FHAF…DLGP), 429 to 463 (TEET…EIVA), and 464 to 498 (NPAL…GFVG). The tract at residues 514-540 (VRKSKRMNLQKVGSQEGYKGQRSVDRK) is disordered.

The protein belongs to the PPR family. P subfamily.

The protein resides in the mitochondrion. The sequence is that of Pentatricopeptide repeat-containing protein At1g80880, mitochondrial from Arabidopsis thaliana (Mouse-ear cress).